A 332-amino-acid polypeptide reads, in one-letter code: Ferredoxin--NADP reductase 2 (332 aa).

Residues Glu37, Gln45, Tyr50, Val90, Phe124, Asp285, and Thr326 each contribute to the FAD site.

Belongs to the ferredoxin--NADP reductase type 2 family. As to quaternary structure, homodimer. The cofactor is FAD.

It catalyses the reaction 2 reduced [2Fe-2S]-[ferredoxin] + NADP(+) + H(+) = 2 oxidized [2Fe-2S]-[ferredoxin] + NADPH. The polypeptide is Ferredoxin--NADP reductase 2 (Bacillus licheniformis (strain ATCC 14580 / DSM 13 / JCM 2505 / CCUG 7422 / NBRC 12200 / NCIMB 9375 / NCTC 10341 / NRRL NRS-1264 / Gibson 46)).